The following is a 774-amino-acid chain: Ion-translocating oxidoreductase complex subunit C (774 aa).

2 consecutive 4Fe-4S ferredoxin-type domains span residues Gly369 to Tyr397 and Lys407 to Phe436. Cys377, Cys380, Cys383, Cys387, Cys416, Cys419, Cys422, and Cys426 together coordinate [4Fe-4S] cluster. Residues Lys602–Lys750 form a disordered region.

Belongs to the 4Fe4S bacterial-type ferredoxin family. RnfC subfamily. As to quaternary structure, the complex is composed of six subunits: RsxA, RsxB, RsxC, RsxD, RsxE and RsxG. [4Fe-4S] cluster serves as cofactor.

It is found in the cell inner membrane. Part of a membrane-bound complex that couples electron transfer with translocation of ions across the membrane. Required to maintain the reduced state of SoxR. This Escherichia coli O6:K15:H31 (strain 536 / UPEC) protein is Ion-translocating oxidoreductase complex subunit C.